Consider the following 389-residue polypeptide: DNA replication and repair protein RecF (389 aa).

Position 30 to 37 (30 to 37) interacts with ATP; that stretch reads GPNGFGKT.

Belongs to the RecF family.

The protein resides in the cytoplasm. The RecF protein is involved in DNA metabolism; it is required for DNA replication and normal SOS inducibility. RecF binds preferentially to single-stranded, linear DNA. It also seems to bind ATP. The sequence is that of DNA replication and repair protein RecF from Mycolicibacterium gilvum (strain PYR-GCK) (Mycobacterium gilvum (strain PYR-GCK)).